Here is a 304-residue protein sequence, read N- to C-terminus: Putative integrase/recombinase HI_1414 (304 aa).

Positions 30-109 (TLFSDVIKRY…TIGHIFKIAL (80 aa)) constitute a Core-binding (CB) domain. Positions 131–304 (PRTQRVTEEN…DMAEVAELLD (174 aa)) constitute a Tyr recombinase domain. Active-site residues include R174, K199, H256, R259, and H281. Catalysis depends on Y291, which acts as the O-(3'-phospho-DNA)-tyrosine intermediate.

The protein belongs to the 'phage' integrase family.

The sequence is that of Putative integrase/recombinase HI_1414 from Haemophilus influenzae (strain ATCC 51907 / DSM 11121 / KW20 / Rd).